A 227-amino-acid polypeptide reads, in one-letter code: Lipoprotein-releasing system ATP-binding protein LolD (227 aa).

One can recognise an ABC transporter domain in the interval 7–227; sequence LKLTGVERHY…TISDGKVVEF (221 aa). 43-50 serves as a coordination point for ATP; the sequence is APSGTGKS.

It belongs to the ABC transporter superfamily. Lipoprotein translocase (TC 3.A.1.125) family. As to quaternary structure, the complex is composed of two ATP-binding proteins (LolD) and two transmembrane proteins (LolC and LolE).

It localises to the cell inner membrane. Part of the ABC transporter complex LolCDE involved in the translocation of mature outer membrane-directed lipoproteins, from the inner membrane to the periplasmic chaperone, LolA. Responsible for the formation of the LolA-lipoprotein complex in an ATP-dependent manner. This chain is Lipoprotein-releasing system ATP-binding protein LolD, found in Rhizobium etli (strain ATCC 51251 / DSM 11541 / JCM 21823 / NBRC 15573 / CFN 42).